A 266-amino-acid polypeptide reads, in one-letter code: Blue copper protein (266 aa).

The N-terminal stretch at 1–24 (MAYSKILFCFMIGFVGFLPAITMA) is a signal peptide. Phytocyanin domains are found at residues 25–56 (TQYL…GDTL), 57–102 (APPP…TVED), and 116–216 (TEYW…TVEG). Asn-47 is a glycosylation site (N-linked (GlcNAc...) asparagine). His-156 is a binding site for Cu cation. Asn-162 carries an N-linked (GlcNAc...) asparagine glycan. Cys-169 and Cys-203 form a disulfide bridge. Positions 197, 202, and 208 each coordinate Cu cation. A helical transmembrane segment spans residues 245 to 265 (ITSPYKMFVGGAVSIWTILTL).

It is found in the membrane. This is Blue copper protein from Petunia hybrida (Petunia).